Here is a 197-residue protein sequence, read N- to C-terminus: Nucleoside triphosphate pyrophosphatase (197 aa).

Asp71 (proton acceptor) is an active-site residue.

Belongs to the Maf family. The cofactor is a divalent metal cation.

The protein resides in the cytoplasm. The catalysed reaction is a ribonucleoside 5'-triphosphate + H2O = a ribonucleoside 5'-phosphate + diphosphate + H(+). The enzyme catalyses a 2'-deoxyribonucleoside 5'-triphosphate + H2O = a 2'-deoxyribonucleoside 5'-phosphate + diphosphate + H(+). In terms of biological role, nucleoside triphosphate pyrophosphatase. May have a dual role in cell division arrest and in preventing the incorporation of modified nucleotides into cellular nucleic acids. This is Nucleoside triphosphate pyrophosphatase from Synechococcus sp. (strain JA-2-3B'a(2-13)) (Cyanobacteria bacterium Yellowstone B-Prime).